A 955-amino-acid chain; its full sequence is Protein MEI2-like 3 (955 aa).

A disordered region spans residues 64 to 83; the sequence is IQPNGANHAGDPETPGGQAF. RRM domains follow at residues 270–343 and 355–428; these read RTLV…FSFP and GMLV…LSQH. 2 disordered regions span residues 436 to 465 and 897 to 955; these read RQQH…KLGT and NAGD…LEQT. Positions 935–955 are enriched in polar residues; sequence DQESNSVGTANSTCRTTLEQT.

In terms of biological role, probable RNA-binding protein that may play a role in growth regulation. The chain is Protein MEI2-like 3 (ML3) from Oryza sativa subsp. japonica (Rice).